The primary structure comprises 90 residues: SSSSSSASRALPAQDPPMEKALSMFSEDFGSFMLPHSEPLTFPARPGGQGNIKTLGDAYEFTVDMRDFSPEDIIVTTSNNHIEVRAEKKP.

The sHSP domain maps to 39–90 (PLTFPARPGGQGNIKTLGDAYEFTVDMRDFSPEDIIVTTSNNHIEVRAEKKP).

The protein belongs to the small heat shock protein (HSP20) family. As to quaternary structure, interacts with C-terminal domain of actin-binding protein 280. Found in both cardiac and skeletal muscle.

It localises to the cytoplasm. It is found in the nucleus. Its subcellular location is the cajal body. The chain is Heat shock protein beta-7 (Hspb7) from Rattus norvegicus (Rat).